A 68-amino-acid chain; its full sequence is Large ribosomal subunit protein bL31 (68 aa).

Positions 16, 18, 36, and 39 each coordinate Zn(2+).

Belongs to the bacterial ribosomal protein bL31 family. Type A subfamily. In terms of assembly, part of the 50S ribosomal subunit. Requires Zn(2+) as cofactor.

In terms of biological role, binds the 23S rRNA. The polypeptide is Large ribosomal subunit protein bL31 (Sorangium cellulosum (strain So ce56) (Polyangium cellulosum (strain So ce56))).